Here is a 144-residue protein sequence, read N- to C-terminus: MGASKVKQDMPPPGGYGPIDYKRNLPRRGLSGYSMLAIGIGTLIYGHWSIMKWNRERRRLQIEDFEARIALLPLLQAETDRRTLQMLRENLEEEAIIMKDVPDWKVGESVFHTTRWVPPLIGELYGLRTTEEALHASHGFMWYT.

A helical membrane pass occupies residues 30–51 (LSGYSMLAIGIGTLIYGHWSIM).

The protein belongs to the complex I NDUFA13 subunit family. In terms of assembly, complex I is composed of 45 different subunits. Interacts with CARD15, but not with CARD4. Interacts with STAT3, but not with STAT1, STAT2 and STAT5A. Interacts with OLFM4.

The protein localises to the mitochondrion inner membrane. The protein resides in the nucleus. Accessory subunit of the mitochondrial membrane respiratory chain NADH dehydrogenase (Complex I), that is believed not to be involved in catalysis. Complex I functions in the transfer of electrons from NADH to the respiratory chain. The immediate electron acceptor for the enzyme is believed to be ubiquinone. Involved in the interferon/all-trans-retinoic acid (IFN/RA) induced cell death. This apoptotic activity is inhibited by interaction with viral IRF1. Prevents the transactivation of STAT3 target genes. May play a role in CARD15-mediated innate mucosal responses and serve to regulate intestinal epithelial cell responses to microbes. This Gorilla gorilla gorilla (Western lowland gorilla) protein is NADH dehydrogenase [ubiquinone] 1 alpha subcomplex subunit 13 (NDUFA13).